A 296-amino-acid polypeptide reads, in one-letter code: GTPase Era (296 aa).

In terms of domain architecture, Era-type G spans 7 to 174; that stretch reads KCSMSAIVGT…VDYLCETSPY (168 aa). A G1 region spans residues 15–22; it reads GTTNAGKS. Residue 15–22 coordinates GTP; the sequence is GTTNAGKS. The G2 stretch occupies residues 41–45; sequence QTTRV. The segment at 62-65 is G3; the sequence is DTPG. Residues 62–66 and 124–127 each bind GTP; these read DTPGI and NKID. Positions 124–127 are G4; the sequence is NKID. Residues 153 to 155 are G5; that stretch reads ISA. The 78-residue stretch at 205 to 282 folds into the KH type-2 domain; that stretch reads LRHELPYSLS…HLFLFVKVRE (78 aa).

This sequence belongs to the TRAFAC class TrmE-Era-EngA-EngB-Septin-like GTPase superfamily. Era GTPase family. In terms of assembly, monomer.

The protein resides in the cytoplasm. Its subcellular location is the cell inner membrane. Its function is as follows. An essential GTPase that binds both GDP and GTP, with rapid nucleotide exchange. Plays a role in 16S rRNA processing and 30S ribosomal subunit biogenesis and possibly also in cell cycle regulation and energy metabolism. The chain is GTPase Era from Ehrlichia ruminantium (strain Gardel).